We begin with the raw amino-acid sequence, 329 residues long: Isoaspartyl peptidase/L-asparaginase (329 aa).

Residue threonine 173 is the Nucleophile of the active site. Residues 201–204 (RVSD) and 222–225 (TGVG) contribute to the substrate site.

This sequence belongs to the Ntn-hydrolase family. In terms of assembly, heterotetramer of two alpha and two beta chains arranged as a dimer of alpha/beta heterodimers. Cleaved into an alpha and beta chain by autocatalysis; this activates the enzyme. The N-terminal residue of the beta subunit is responsible for the nucleophile hydrolase activity.

The enzyme catalyses Cleavage of a beta-linked Asp residue from the N-terminus of a polypeptide.. Degrades proteins damaged by L-isoaspartyl residue formation (also known as beta-Asp residues). Probably performs the final step in the degradation of the reserve polymer cyanophycin (depolymerizes the building block L-beta-Asp-Arg). Also has L-asparaginase activity. In Synechocystis sp. (strain ATCC 27184 / PCC 6803 / Kazusa), this protein is Isoaspartyl peptidase/L-asparaginase.